Consider the following 171-residue polypeptide: tRNA-specific adenosine deaminase (171 aa).

Residues 6-133 form the CMP/dCMP-type deaminase domain; it reads EEQTYFMQEA…ERLNHRVQVE (128 aa). Residue His57 coordinates Zn(2+). The Proton donor role is filled by Glu59. Cys87 and Cys90 together coordinate Zn(2+).

This sequence belongs to the cytidine and deoxycytidylate deaminase family. As to quaternary structure, homodimer. Zn(2+) serves as cofactor.

It carries out the reaction adenosine(34) in tRNA + H2O + H(+) = inosine(34) in tRNA + NH4(+). In terms of biological role, catalyzes the deamination of adenosine to inosine at the wobble position 34 of tRNA(Arg2). This Streptococcus pyogenes serotype M1 protein is tRNA-specific adenosine deaminase.